The primary structure comprises 526 residues: Rho guanine nucleotide exchange factor 3 (526 aa).

A disordered region spans residues Glu20 to Lys40. Phosphoserine occurs at positions 47 and 70. Residues Lys122–Lys304 form the DH domain. Residues Ile291–Glu449 enclose the PH domain. The segment at Glu464 to Val526 is disordered. Positions Ser466–Arg475 are enriched in polar residues.

As to quaternary structure, interacts with RHOA and RHOB.

The protein localises to the cytoplasm. Its function is as follows. Acts as a guanine nucleotide exchange factor (GEF) for RhoA and RhoB GTPases. The protein is Rho guanine nucleotide exchange factor 3 (ARHGEF3) of Pongo abelii (Sumatran orangutan).